The chain runs to 759 residues: NADP-dependent malic enzyme (759 aa).

Residues 1 to 428 are malic enzyme; sequence MDDQLKQSAL…KLTEFVYKTN (428 aa). Y39 functions as the Proton donor in the catalytic mechanism. K56 bears the N6-acetyllysine mark. K94 (proton acceptor) is an active-site residue. A divalent metal cation is bound by residues E136, D137, and D162. NADP(+)-binding positions include 195–198, N288, and N320; that span reads AGAA. The segment at 429-759 is phosphate acetyltransferase; required for oligomerization, inhibition by acetyl-CoA and activation by glutamate, aspartate, and glucose-6-phosphate; it reads LFMKPIFSQA…AVVEAQTQPL (331 aa).

The protein in the N-terminal section; belongs to the malic enzymes family. In the C-terminal section; belongs to the phosphate acetyltransferase and butyryltransferase family. As to quaternary structure, homooligomer, possibly an octamer. The cofactor is Mg(2+). Mn(2+) is required as a cofactor.

It carries out the reaction (S)-malate + NADP(+) = pyruvate + CO2 + NADPH. It catalyses the reaction oxaloacetate + H(+) = pyruvate + CO2. Inhibited by 4 mM Mg(2+) and acetyl-CoA, competitively inhibited by fumarate and oxaloacetate. Activated by glutamate and aspartate, glucose-6-phosphate, acetyl-phosphate and 2 mM KCl. Functionally, catalyzes the decarboxylation of malate to pyruvate. In vitro, shows malolactic enzyme activity in the presence of NADPH. However, it is unlikely that this activity is of relevance in E.coli, which produces little NADPH. This chain is NADP-dependent malic enzyme (maeB), found in Escherichia coli (strain K12).